A 154-amino-acid chain; its full sequence is Aspartate carbamoyltransferase regulatory chain (154 aa).

4 residues coordinate Zn(2+): Cys-109, Cys-114, Cys-138, and Cys-141.

The protein belongs to the PyrI family. In terms of assembly, contains catalytic and regulatory chains. Zn(2+) is required as a cofactor.

Involved in allosteric regulation of aspartate carbamoyltransferase. In Aliivibrio salmonicida (strain LFI1238) (Vibrio salmonicida (strain LFI1238)), this protein is Aspartate carbamoyltransferase regulatory chain.